Here is a 246-residue protein sequence, read N- to C-terminus: Chalcone--flavanone isomerase 1 (246 aa).

Substrate contacts are provided by Thr-59, Asn-124, and Ser-201.

Belongs to the chalcone isomerase family. In terms of tissue distribution, mostly expressed in siliques and flowers, and, to a lower extent, in leaves.

The enzyme catalyses a chalcone = a flavanone.. The protein operates within secondary metabolite biosynthesis; flavonoid biosynthesis. Catalyzes the intramolecular cyclization of bicyclic chalcones into tricyclic (S)-flavanones. Responsible for the isomerization of 4,2',4',6'-tetrahydroxychalcone (also termed chalcone) into naringenin. The sequence is that of Chalcone--flavanone isomerase 1 (CHI1) from Arabidopsis thaliana (Mouse-ear cress).